An 895-amino-acid polypeptide reads, in one-letter code: Probable methyltransferase PMT27 (895 aa).

Over 1–16 the chain is Cytoplasmic; sequence MAFGRGRGNKRTSTSS. Residues 17 to 37 traverse the membrane as a helical; Signal-anchor for type II membrane protein segment; that stretch reads YASTITMVIFVALCVFGVWML. Over 38-895 the chain is Lumenal; it reads SSNSVIPPQI…KGFWRPETSQ (858 aa). Residues 43 to 52 are compositionally biased toward polar residues; sequence IPPQITQGST. Positions 43-362 are disordered; sequence IPPQITQGST…QRQTSESNTV (320 aa). Basic and acidic residues predominate over residues 90-114; sequence NPGKLPDDAVKSEDEQRKSAKEKSE. Over residues 115–127 the composition is skewed to low complexity; the sequence is TTSSKTQTQETQQ. Residues 129 to 143 show a composition bias toward basic and acidic residues; that stretch reads NDDKISEEKEKDNGK. An N-linked (GlcNAc...) asparagine glycan is attached at Asn-145. Basic and acidic residues predominate over residues 154-174; it reads GQMKKVVKEFEKEQKQQRDED. Low complexity predominate over residues 176-191; sequence GTQPKGTQGQEQGQGK. 2 stretches are compositionally biased toward polar residues: residues 199 to 232 and 243 to 256; these read GNKQ…GETS and PEEQ…TGQQ. Basic and acidic residues predominate over residues 257-320; sequence NEEKTTASEE…RKDEKKHEQG (64 aa). Over residues 337–346 the composition is skewed to polar residues; that stretch reads SQKSWKSQAT. 2 N-linked (GlcNAc...) asparagine glycosylation sites follow: Asn-375 and Asn-709.

It belongs to the methyltransferase superfamily.

The protein localises to the endoplasmic reticulum membrane. The protein is Probable methyltransferase PMT27 of Arabidopsis thaliana (Mouse-ear cress).